Consider the following 252-residue polypeptide: 3-deoxy-manno-octulosonate cytidylyltransferase (252 aa).

It belongs to the KdsB family.

It localises to the cytoplasm. The enzyme catalyses 3-deoxy-alpha-D-manno-oct-2-ulosonate + CTP = CMP-3-deoxy-beta-D-manno-octulosonate + diphosphate. The protein operates within nucleotide-sugar biosynthesis; CMP-3-deoxy-D-manno-octulosonate biosynthesis; CMP-3-deoxy-D-manno-octulosonate from 3-deoxy-D-manno-octulosonate and CTP: step 1/1. Its pathway is bacterial outer membrane biogenesis; lipopolysaccharide biosynthesis. Activates KDO (a required 8-carbon sugar) for incorporation into bacterial lipopolysaccharide in Gram-negative bacteria. In Vibrio cholerae serotype O1 (strain ATCC 39315 / El Tor Inaba N16961), this protein is 3-deoxy-manno-octulosonate cytidylyltransferase.